Consider the following 90-residue polypeptide: MANTASAEKRNRQAQKRRARNVQVRTGVKSAVKKAREAITQGDGNAARDAFKAAARALEKASSKGVVHKNAASRKISRLAKAAAKVAAAK.

The tract at residues 1 to 29 (MANTASAEKRNRQAQKRRARNVQVRTGVK) is disordered.

It belongs to the bacterial ribosomal protein bS20 family.

Its function is as follows. Binds directly to 16S ribosomal RNA. The polypeptide is Small ribosomal subunit protein bS20 (Anaeromyxobacter sp. (strain Fw109-5)).